The following is a 187-amino-acid chain: Elongation factor P (187 aa).

The protein belongs to the elongation factor P family.

The protein localises to the cytoplasm. It functions in the pathway protein biosynthesis; polypeptide chain elongation. Involved in peptide bond synthesis. Stimulates efficient translation and peptide-bond synthesis on native or reconstituted 70S ribosomes in vitro. Probably functions indirectly by altering the affinity of the ribosome for aminoacyl-tRNA, thus increasing their reactivity as acceptors for peptidyl transferase. In Chromobacterium violaceum (strain ATCC 12472 / DSM 30191 / JCM 1249 / CCUG 213 / NBRC 12614 / NCIMB 9131 / NCTC 9757 / MK), this protein is Elongation factor P.